Here is a 443-residue protein sequence, read N- to C-terminus: Serine/threonine-protein phosphatase 2A 55 kDa regulatory subunit B beta isoform (443 aa).

WD repeat units lie at residues Thr22 to Pro61, Glu87 to Glu128, Ala171 to Asn209, Glu220 to Asn260, Glu279 to Glu317, Glu334 to Leu375, and Asp410 to Asn443.

The protein belongs to the phosphatase 2A regulatory subunit B family. In terms of assembly, PP2A consists of a common heterodimeric core enzyme, composed of a 36 kDa catalytic subunit (subunit C) and a 65 kDa constant regulatory subunit (PR65 or subunit A), that associates with a variety of regulatory subunits.

The protein resides in the cytoplasm. The protein localises to the cytoskeleton. Its subcellular location is the membrane. Its function is as follows. The B regulatory subunit might modulate substrate selectivity and catalytic activity, and might also direct the localization of the catalytic enzyme to a particular subcellular compartment. This Carassius auratus (Goldfish) protein is Serine/threonine-protein phosphatase 2A 55 kDa regulatory subunit B beta isoform (ppp2r2b).